The following is a 324-amino-acid chain: Probable fructokinase-5 (324 aa).

Belongs to the carbohydrate kinase PfkB family.

The catalysed reaction is D-fructose + ATP = D-fructose 6-phosphate + ADP + H(+). It functions in the pathway glycan biosynthesis; starch biosynthesis. May play an important role in maintaining the flux of carbon towards starch formation. This is Probable fructokinase-5 from Arabidopsis thaliana (Mouse-ear cress).